The chain runs to 82 residues: Myosin light chain alkali (82 aa).

The 36-residue stretch at G7–S42 folds into the EF-hand domain.

As to quaternary structure, myosin is a hexamer of 2 heavy chains and 4 light chains.

The protein is Myosin light chain alkali (Mlc1) of Drosophila sechellia (Fruit fly).